Here is a 333-residue protein sequence, read N- to C-terminus: Protoheme IX farnesyltransferase (333 aa).

8 helical membrane-spanning segments follow: residues Leu36 to Leu56, Leu61 to Leu81, Ala107 to Val127, Leu130 to Leu150, Ile158 to Gly178, Trp186 to Leu206, Phe243 to Phe263, and Ala284 to Phe304.

Belongs to the UbiA prenyltransferase family. Protoheme IX farnesyltransferase subfamily.

It localises to the cell inner membrane. The enzyme catalyses heme b + (2E,6E)-farnesyl diphosphate + H2O = Fe(II)-heme o + diphosphate. It participates in porphyrin-containing compound metabolism; heme O biosynthesis; heme O from protoheme: step 1/1. Converts heme B (protoheme IX) to heme O by substitution of the vinyl group on carbon 2 of heme B porphyrin ring with a hydroxyethyl farnesyl side group. The chain is Protoheme IX farnesyltransferase from Synechococcus sp. (strain WH7803).